The chain runs to 486 residues: Cardiolipin synthase A (486 aa).

2 consecutive transmembrane segments (helical) span residues 3 to 23 and 38 to 58; these read TFYTVISWLSVFGYWLLIAGV and MAWLLIIYILPLVGIIAYLSF. 2 consecutive PLD phosphodiesterase domains span residues 219 to 246 and 399 to 426; these read MDLRQHRKIVLIDNYVAYTGSMNMVDPR and EGGLLHSKSVLVDGQLSLVGTVNLDMRS. Catalysis depends on residues His224, Lys226, Asp231, His404, Lys406, and Asp411.

Belongs to the phospholipase D family. Cardiolipin synthase subfamily. ClsA sub-subfamily.

Its subcellular location is the cell inner membrane. It catalyses the reaction 2 a 1,2-diacyl-sn-glycero-3-phospho-(1'-sn-glycerol) = a cardiolipin + glycerol. Functionally, catalyzes the reversible phosphatidyl group transfer from one phosphatidylglycerol molecule to another to form cardiolipin (CL) (diphosphatidylglycerol) and glycerol. The protein is Cardiolipin synthase A of Yersinia pseudotuberculosis serotype O:3 (strain YPIII).